Reading from the N-terminus, the 209-residue chain is Pyridoxine/pyridoxamine 5'-phosphate oxidase (209 aa).

Substrate contacts are provided by residues 7 to 10 and Lys-64; that span reads REDY. FMN contacts are provided by residues 59-64, 74-75, Arg-80, and Lys-81; these read RIVLLK and FT. 3 residues coordinate substrate: Tyr-121, Arg-125, and Ser-129. FMN contacts are provided by residues 138–139 and Trp-182; that span reads QS. 188 to 190 is a substrate binding site; it reads RLH. Residue Arg-192 coordinates FMN.

The protein belongs to the pyridoxamine 5'-phosphate oxidase family. Homodimer. The cofactor is FMN.

The enzyme catalyses pyridoxamine 5'-phosphate + O2 + H2O = pyridoxal 5'-phosphate + H2O2 + NH4(+). The catalysed reaction is pyridoxine 5'-phosphate + O2 = pyridoxal 5'-phosphate + H2O2. It functions in the pathway cofactor metabolism; pyridoxal 5'-phosphate salvage; pyridoxal 5'-phosphate from pyridoxamine 5'-phosphate: step 1/1. Its pathway is cofactor metabolism; pyridoxal 5'-phosphate salvage; pyridoxal 5'-phosphate from pyridoxine 5'-phosphate: step 1/1. Catalyzes the oxidation of either pyridoxine 5'-phosphate (PNP) or pyridoxamine 5'-phosphate (PMP) into pyridoxal 5'-phosphate (PLP). This is Pyridoxine/pyridoxamine 5'-phosphate oxidase from Actinobacillus pleuropneumoniae serotype 7 (strain AP76).